The sequence spans 488 residues: 3-octaprenyl-4-hydroxybenzoate carboxy-lyase (488 aa).

Residue Asn172 coordinates Mn(2+). Prenylated FMN is bound by residues Ile175–Arg177, Arg189–Leu191, and Arg194–Gly195. Glu238 is a Mn(2+) binding site. Asp287 serves as the catalytic Proton donor.

Belongs to the UbiD family. In terms of assembly, homohexamer. It depends on prenylated FMN as a cofactor. Mn(2+) serves as cofactor.

The protein localises to the cell membrane. It carries out the reaction a 4-hydroxy-3-(all-trans-polyprenyl)benzoate + H(+) = a 2-(all-trans-polyprenyl)phenol + CO2. Its pathway is cofactor biosynthesis; ubiquinone biosynthesis. Catalyzes the decarboxylation of 3-octaprenyl-4-hydroxy benzoate to 2-octaprenylphenol, an intermediate step in ubiquinone biosynthesis. The chain is 3-octaprenyl-4-hydroxybenzoate carboxy-lyase from Pseudomonas paraeruginosa (strain DSM 24068 / PA7) (Pseudomonas aeruginosa (strain PA7)).